Here is a 431-residue protein sequence, read N- to C-terminus: Levansucrase LscB (431 aa).

Sucrose-binding residues include W61, D62, A148, R218, and D219. D62 acts as the Nucleophile in catalysis. E303 acts as the Proton donor/acceptor in catalysis.

The protein belongs to the glycosyl hydrolase 68 family.

Its subcellular location is the secreted. The enzyme catalyses [6)-beta-D-fructofuranosyl-(2-&gt;](n) alpha-D-glucopyranoside + sucrose = [6)-beta-D-fructofuranosyl-(2-&gt;](n+1) alpha-D-glucopyranoside + D-glucose. Functionally, catalyzes the synthesis of levan, a fructose polymer, by transferring the fructosyl moiety from sucrose to a growing acceptor molecule. This chain is Levansucrase LscB, found in Pseudomonas savastanoi pv. glycinea (Pseudomonas syringae pv. glycinea).